The following is a 148-amino-acid chain: Large ribosomal subunit protein bL9 (148 aa).

This sequence belongs to the bacterial ribosomal protein bL9 family.

Functionally, binds to the 23S rRNA. The chain is Large ribosomal subunit protein bL9 from Bacillus cytotoxicus (strain DSM 22905 / CIP 110041 / 391-98 / NVH 391-98).